The chain runs to 585 residues: Probable multidrug resistance ABC transporter ATP-binding/permease protein YheI (585 aa).

Residues 19–304 (YTIAIVLLLA…IGELINVMQR (286 aa)) form the ABC transmembrane type-1 domain. Transmembrane regions (helical) follow at residues 21 to 41 (IAIV…KLLG), 57 to 77 (LLFY…MSYF), 127 to 147 (AVSL…MFMM), 149 to 169 (IFLT…IIPL), 249 to 269 (VKLL…FLVF), and 279 to 299 (VSFN…GELI). The 236-residue stretch at 337–572 (IVFSHVSFTY…NGWYREQYER (236 aa)) folds into the ABC transporter domain. 371–378 (GKTGSGKT) lines the ATP pocket.

The protein belongs to the ABC transporter superfamily. Heterodimer composed of YheH and YheI.

The protein localises to the cell membrane. Inhibited by ortho-vanadate. Involved in the transport of four structurally unrelated drugs, including doxorubicin and mitoxantrone. Transmembrane domains (TMD) form a pore in the membrane and the ATP-binding domain (NBD) is responsible for energy generation. The protein is Probable multidrug resistance ABC transporter ATP-binding/permease protein YheI (yheI) of Bacillus subtilis (strain 168).